The sequence spans 114 residues: Large ribosomal subunit protein bL20c (114 aa).

The protein belongs to the bacterial ribosomal protein bL20 family.

It localises to the plastid. The protein localises to the chloroplast. In terms of biological role, binds directly to 23S ribosomal RNA and is necessary for the in vitro assembly process of the 50S ribosomal subunit. It is not involved in the protein synthesizing functions of that subunit. This is Large ribosomal subunit protein bL20c (rpl20) from Guillardia theta (Cryptophyte).